The sequence spans 101 residues: Small ribosomal subunit protein uS14 (101 aa).

Belongs to the universal ribosomal protein uS14 family. Part of the 30S ribosomal subunit. Contacts proteins S3 and S10.

Binds 16S rRNA, required for the assembly of 30S particles and may also be responsible for determining the conformation of the 16S rRNA at the A site. The chain is Small ribosomal subunit protein uS14 from Xylella fastidiosa (strain 9a5c).